The sequence spans 307 residues: ATP-dependent (S)-NAD(P)H-hydrate dehydratase (307 aa).

The region spanning 1–291 (MDHFIKLLPK…DEIPKLVRDV (291 aa)) is the YjeF C-terminal domain. (6S)-NADPHX contacts are provided by residues Gly96 and 150-156 (NIVEFSR). Residues 194–198 (KGEVD) and 214–223 (SSLRRCGGQG) each bind ATP. Residue Asp224 participates in (6S)-NADPHX binding.

It belongs to the NnrD/CARKD family. Mg(2+) is required as a cofactor.

The enzyme catalyses (6S)-NADHX + ATP = ADP + phosphate + NADH + H(+). It catalyses the reaction (6S)-NADPHX + ATP = ADP + phosphate + NADPH + H(+). In terms of biological role, catalyzes the dehydration of the S-form of NAD(P)HX at the expense of ATP, which is converted to ADP. Together with NAD(P)HX epimerase, which catalyzes the epimerization of the S- and R-forms, the enzyme allows the repair of both epimers of NAD(P)HX, a damaged form of NAD(P)H that is a result of enzymatic or heat-dependent hydration. This chain is ATP-dependent (S)-NAD(P)H-hydrate dehydratase, found in Caenorhabditis elegans.